A 55-amino-acid polypeptide reads, in one-letter code: Lantibiotic nisin-U (55 aa).

Positions 1–24 are excised as a propeptide; it reads MNNEDFNLDLIKISKENNSGASPR. At Thr-26 the chain carries 2,3-didehydrobutyrine. The lanthionine (Ser-Cys) cross-link spans 27–31; that stretch reads SKSLC. Ser-29 carries the post-translational modification 2,3-didehydroalanine (Ser). 4 consecutive cross-links (beta-methyllanthionine (Thr-Cys)) follow at residues 32 to 35, 37 to 43, 47 to 50, and 49 to 52; these read TPGC, TGILMTC, TATC, and TCGC. Thr-42 carries the post-translational modification 2,3-didehydrobutyrine.

Post-translationally, maturation of lantibiotics involves the enzymatic conversion of Thr, and Ser into dehydrated AA and the formation of thioether bonds with cysteine. This is followed by membrane translocation and cleavage of the modified precursor.

The protein resides in the secreted. Functionally, lanthionine-containing peptide antibiotic (lantibiotic) active on Gram-positive bacteria. The bactericidal activity of lantibiotics is based on depolarization of energized bacterial cytoplasmic membranes, initiated by the formation of aqueous transmembrane pores. The protein is Lantibiotic nisin-U (nsuA) of Streptococcus uberis.